The sequence spans 335 residues: MNIKDIARLSGVGVSTVSRVINNHPDVKQSTREKVLQIIKDSNYIPNNSARILKQNNTKNIGVLVKGVFNPFFSEMTNIIGNIIEENGYTMILQQNDFNLYQDVETMIGFVKEKRLQGVICLGGNFTEIQEDSFEDIKVPVVLTSVNTISKKGKKYYSSVGIDNSKSAYKAVRYLIERVIKDCFGLGEVNDLGVSWWRLDGYKKALGENNIDIDDELIISGEYNSGTAYENVNKLLKKRKDITAIFALSDIMALGAIKAAIDNGLDVPRDISIVGFDGMDESKYYNPSITTVKQPKKKMAETSVELLFSLITTDGENKHVILDTELVERDSCFNI.

Positions 1 to 55 constitute an HTH lacI-type domain; that stretch reads MNIKDIARLSGVGVSTVSRVINNHPDVKQSTREKVLQIIKDSNYIPNNSARILKQ. The segment at residues 3–22 is a DNA-binding region (H-T-H motif); that stretch reads IKDIARLSGVGVSTVSRVIN.

In terms of biological role, repressor of glucanotransferase gene expression. This is HTH-type transcriptional regulator MalR from Clostridium butyricum.